The primary structure comprises 59 residues: Small EDRK-rich factor 2 (59 aa).

2 stretches are compositionally biased toward basic and acidic residues: residues 1–30 and 50–59; these read MTRG…RDDG and KANEKKEEPK. The tract at residues 1-59 is disordered; sequence MTRGNQRELARQKNMKKQSDSVKGKRRDDGLSAAARKQRDSEIMQQKQKKANEKKEEPK.

The protein belongs to the SERF family.

Positive regulator of amyloid protein aggregation and proteotoxicity. Induces conformational changes in amyloid proteins, such as HTT, driving them into compact formations preceding the formation of aggregates. The sequence is that of Small EDRK-rich factor 2 (SERF2) from Plecturocebus moloch (Dusky titi monkey).